The chain runs to 424 residues: Glutamyl-tRNA reductase (424 aa).

Residues Thr51–Arg54, Ser99, Glu104–Gln106, and Gln110 contribute to the substrate site. Residue Cys52 is the Nucleophile of the active site. Residue Gly179–Gly184 coordinates NADP(+).

It belongs to the glutamyl-tRNA reductase family. In terms of assembly, homodimer.

It carries out the reaction (S)-4-amino-5-oxopentanoate + tRNA(Glu) + NADP(+) = L-glutamyl-tRNA(Glu) + NADPH + H(+). It functions in the pathway porphyrin-containing compound metabolism; protoporphyrin-IX biosynthesis; 5-aminolevulinate from L-glutamyl-tRNA(Glu): step 1/2. Its function is as follows. Catalyzes the NADPH-dependent reduction of glutamyl-tRNA(Glu) to glutamate 1-semialdehyde (GSA). The sequence is that of Glutamyl-tRNA reductase from Methanocorpusculum labreanum (strain ATCC 43576 / DSM 4855 / Z).